The primary structure comprises 386 residues: Chaperone protein DnaJ (386 aa).

The region spanning 4–68 (NFYDVLGVSR…QKRQQYDQLG (65 aa)) is the J domain. Basic and acidic residues-rich tracts occupy residues 22–35 (KAYR…HPDV) and 43–79 (ERFK…DKRG). The interval 22-132 (KAYRKQAAEH…GGNRPRQGQD (111 aa)) is disordered. 2 stretches are compositionally biased toward gly residues: residues 80 to 104 (ATGG…GAGG) and 113 to 125 (FGGG…GGGN). The segment at 147 to 229 (GATKEVTLTR…CGGDGVVREE (83 aa)) adopts a CR-type zinc-finger fold. Cys160, Cys163, Cys177, Cys180, Cys203, Cys206, Cys217, and Cys220 together coordinate Zn(2+). CXXCXGXG motif repeat units lie at residues 160 to 167 (CDTCDGAG), 177 to 184 (CSQCNGRG), 203 to 210 (CPRCEGSG), and 217 to 224 (CADCGGDG).

Belongs to the DnaJ family. In terms of assembly, homodimer. Zn(2+) serves as cofactor.

It localises to the cytoplasm. Functionally, participates actively in the response to hyperosmotic and heat shock by preventing the aggregation of stress-denatured proteins and by disaggregating proteins, also in an autonomous, DnaK-independent fashion. Unfolded proteins bind initially to DnaJ; upon interaction with the DnaJ-bound protein, DnaK hydrolyzes its bound ATP, resulting in the formation of a stable complex. GrpE releases ADP from DnaK; ATP binding to DnaK triggers the release of the substrate protein, thus completing the reaction cycle. Several rounds of ATP-dependent interactions between DnaJ, DnaK and GrpE are required for fully efficient folding. Also involved, together with DnaK and GrpE, in the DNA replication of plasmids through activation of initiation proteins. This Halorubrum lacusprofundi (strain ATCC 49239 / DSM 5036 / JCM 8891 / ACAM 34) protein is Chaperone protein DnaJ.